Here is a 2472-residue protein sequence, read N- to C-terminus: Centrosomal protein of 290 kDa (2472 aa).

Residues 1-689 (MPPNIKWKEL…MESKNAEGIF (689 aa)) form a self-association (with itself or C-terminus) region. Coiled coils occupy residues 59-747 (MKMK…LRQS), 1129-1392 (RQRI…QQSK), and 1459-1492 (QVILKTQATCKSLEEKLKEKESALRLAEQNILSR). Positions 128–164 (DRELEDMEKELDKEKKVNEQLALRNEEAENENSKLRR) are disordered. Over residues 137–164 (ELDKEKKVNEQLALRNEEAENENSKLRR) the composition is skewed to basic and acidic residues. Positions 690-890 (DASLHLKAQV…TVLQVNEKSL (201 aa)) are interaction with IQCB1. Disordered regions lie at residues 1691 to 1713 (AHKDSQSLKSELQAQKEANSRAP) and 2451 to 2472 (PSPLAASEHSEDGESPHSFPIY). Over residues 1697–1713 (SLKSELQAQKEANSRAP) the composition is skewed to polar residues. The self-association (with itself or N-terminus) stretch occupies residues 1960 to 2472 (TTGMTVDQVL…GESPHSFPIY (513 aa)).

As to quaternary structure, part of the tectonic-like complex (also named B9 complex). Interacts with ATF4 via its N-terminal region. Associates with the BBSome complex, interacting (via N-terminus) with BBS4. Interacts with IQCB1/NPHP5; IQCB1 and CEP290/NPHP6 are proposed to form a functional NPHP5-6 module localized to the centrosome. Interacts with NPHP4; the interaction likely requires additional interactors. Interacts with ZNF423, FAM161A, CEP162, CEP162, CEP131, TALPID3, CCDC13, CC2D2A, RPGRIP1. Can self-associate (homo- or heteromeric). Interacts with CCP110; required for suppressing cilia formation. Interacts with RPGR. Associates (via C-terminus) with microtubules; association to microtubule is reduced in response to cellular stress, such as ultraviolet light (UV) radiation or heat shock, in a process that requires p38 MAP kinase signaling. Interacts with FAM161A. Interacts with PCM1. Interacts with CCDC66. Interacts with ARMC9 and CSPP1. Post-translationally, ubiquitinated. May undergo monoubiquitination; monoubiquitination is inhibited in response to cellular stress, such as ultraviolet light (UV) radiation or heat shock, but does not cause its displacement from centriolar satellites. Expressed in multiple organs during early postnatal development, with highest levels in hindbrain.

It localises to the cytoplasm. It is found in the cytoskeleton. Its subcellular location is the microtubule organizing center. The protein localises to the centrosome. The protein resides in the centriolar satellite. It localises to the nucleus. It is found in the centriole. Its subcellular location is the cell projection. The protein localises to the cilium. The protein resides in the cilium basal body. It localises to the cytoplasmic vesicle. Functionally, involved in early and late steps in cilia formation. Its association with CCP110 is required for inhibition of primary cilia formation by CCP110. May play a role in early ciliogenesis in the disappearance of centriolar satellites and in the transition of primary ciliar vesicles (PCVs) to capped ciliary vesicles (CCVs). Required for the centrosomal recruitment of RAB8A and for the targeting of centriole satellite proteins to centrosomes such as of PCM1. Required for the correct localization of ciliary and phototransduction proteins in retinal photoreceptor cells; may play a role in ciliary transport processes. Required for efficient recruitment of RAB8A to primary cilium. In the ciliary transition zone is part of the tectonic-like complex (also named B9 complex) which is required for tissue-specific ciliogenesis and may regulate ciliary membrane composition. Involved in regulation of the BBSome complex integrity, specifically for presence of BBS2, BBS5 and BBS8/TTC8 in the complex, and in ciliary targeting of selected BBSome cargos. May play a role in controlling entry of the BBSome complex to cilia possibly implicating IQCB1/NPHP5. Activates ATF4-mediated transcription. The polypeptide is Centrosomal protein of 290 kDa (Mus musculus (Mouse)).